A 1221-amino-acid chain; its full sequence is DNA-directed RNA polymerase subunit beta (1221 aa).

Residues 1176-1221 form a disordered region; it reads EKKKLAEEEAEIAAEAEAEGSAEGDAAEADADANEAETADDDKASK. The span at 1183–1215 shows a compositional bias: acidic residues; sequence EEAEIAAEAEAEGSAEGDAAEADADANEAETAD.

This sequence belongs to the RNA polymerase beta chain family. As to quaternary structure, the RNAP catalytic core consists of 2 alpha, 1 beta, 1 beta' and 1 omega subunit. When a sigma factor is associated with the core the holoenzyme is formed, which can initiate transcription.

The catalysed reaction is RNA(n) + a ribonucleoside 5'-triphosphate = RNA(n+1) + diphosphate. Its function is as follows. DNA-dependent RNA polymerase catalyzes the transcription of DNA into RNA using the four ribonucleoside triphosphates as substrates. The sequence is that of DNA-directed RNA polymerase subunit beta from Lactobacillus delbrueckii subsp. bulgaricus (strain ATCC 11842 / DSM 20081 / BCRC 10696 / JCM 1002 / NBRC 13953 / NCIMB 11778 / NCTC 12712 / WDCM 00102 / Lb 14).